Here is a 527-residue protein sequence, read N- to C-terminus: Transcriptional regulator ATRX (527 aa).

Residues 1–527 (GRSVVEFGDM…RSYKQKKKRR (527 aa)) form a disordered region. Residues 14 to 23 (RQQSAVSSAG) show a composition bias toward polar residues. The span at 27-46 (PSGKEENVHSPEDKRVTKSK) shows a compositional bias: basic and acidic residues. Residues 47–59 (EKSKHLRTRTGRK) show a composition bias toward basic residues. Residues 60-84 (VKSDVTDRFRKKEQSSESSEGEKKQ) are compositionally biased toward basic and acidic residues. A phosphoserine mark is found at S62 and S74. A compositionally biased stretch (basic residues) spans 85 to 94 (GRQRTGTRGK). Composition is skewed to basic and acidic residues over residues 95–122 (KSTD…KLPE), 136–145 (NKNDTTDEAK), 152–194 (DKSC…EKKQ), and 204–250 (KRPE…KEVK). K105 participates in a covalent cross-link: Glycyl lysine isopeptide (Lys-Gly) (interchain with G-Cter in SUMO2). Phosphoserine occurs at positions 112, 113, and 114. S162 bears the Phosphoserine mark. R184 carries the post-translational modification Citrulline. A compositionally biased stretch (basic residues) spans 267-297 (KQKKQRMSAKKKNSNTKERKRKSLRATTTKR). The interaction with DAXX stretch occupies residues 290–427 (LRATTTKRKQ…SNQVNSESDS (138 aa)). Phosphoserine occurs at positions 345, 346, and 354. A compositionally biased stretch (basic and acidic residues) spans 368–382 (PENRIAKKMLLEEIK). Acidic residues predominate over residues 387–398 (SDEDGSSDDEPK). The span at 399 to 410 (EGEKKRIGKQSE) shows a compositional bias: basic and acidic residues. S423, S425, and S427 each carry phosphoserine. Residues 435–446 (PRYRHRLLRHKL) show a composition bias toward basic residues. Residues S449 and S453 each carry the phosphoserine modification. 2 stretches are compositionally biased toward basic and acidic residues: residues 454-469 (GGEK…ETKG) and 509-518 (KKAELEENQR).

It belongs to the SNF2/RAD54 helicase family. In terms of assembly, interacts with DAXX to form the chromatin remodeling complex ATRX:DAXX. Probably binds EZH2. Binds annexin V in a calcium and phosphatidylcholine/phosphatidylserine-dependent manner. Interacts directly with CBX5 via the PxVxL motif. Interacts with RAD50, MRE11 and NBN; indicative for an association with the MRN complex. Interacts with histone MACROH2A1. Interacts with histone H3 peptides methylated at 'Lys-10' with preferences H3K9me3 &gt; H3K9me2 &gt; H3K9me1. Interacts with histone H3 peptides unmethylated at 'Lys-5' (H3K4me0). Interacts with MECP2, SMC1 and SMC3. Interacts with SETDB1, TRIM28 and ZNF274. Citrullinated by PADI4.

It localises to the nucleus. It is found in the chromosome. The protein resides in the telomere. Its subcellular location is the PML body. The enzyme catalyses ATP + H2O = ADP + phosphate + H(+). Involved in transcriptional regulation and chromatin remodeling. Facilitates DNA replication in multiple cellular environments and is required for efficient replication of a subset of genomic loci. Binds to DNA tandem repeat sequences in both telomeres and euchromatin and in vitro binds DNA quadruplex structures. May help stabilizing G-rich regions into regular chromatin structures by remodeling G4 DNA and incorporating H3.3-containing nucleosomes. Catalytic component of the chromatin remodeling complex ATRX:DAXX which has ATP-dependent DNA translocase activity and catalyzes the replication-independent deposition of histone H3.3 in pericentric DNA repeats outside S-phase and telomeres, and the in vitro remodeling of H3.3-containing nucleosomes. Its heterochromatin targeting is proposed to involve a combinatorial readout of histone H3 modifications (specifically methylation states of H3K9 and H3K4) and association with CBX5. Involved in maintaining telomere structural integrity in embryonic stem cells probably implying recruitment of CBX5 to telomeres. May be involved in transcriptional regulation of telomeric repeat-containing RNA (TERRA). Acts as a negative regulator of chromatin incorporation of transcriptionally repressive histone MACROH2A1, particularily at telomeres. Participates in the allele-specific gene expression at the imprinted IGF2/H19 gene locus. On the maternal allele, required for the chromatin occupancy of SMC1 and CTCTF within the H19 imprinting control region (ICR) and involved in esatblishment of histone tails modifications in the ICR. Binds to zinc-finger coding genes with atypical chromatin signatures and regulates its H3K9me3 levels. Forms a complex with ZNF274, TRIM28 and SETDB1 to facilitate the deposition and maintenance of H3K9me3 at the 3' exons of zinc-finger genes. This Rattus norvegicus (Rat) protein is Transcriptional regulator ATRX (Atrx).